Consider the following 91-residue polypeptide: Acylphosphatase (91 aa).

An Acylphosphatase-like domain is found at Cys3–His91. Active-site residues include Arg18 and Asn36.

Belongs to the acylphosphatase family.

It carries out the reaction an acyl phosphate + H2O = a carboxylate + phosphate + H(+). In Dehalococcoides mccartyi (strain ATCC BAA-2100 / JCM 16839 / KCTC 5957 / BAV1), this protein is Acylphosphatase (acyP).